We begin with the raw amino-acid sequence, 223 residues long: Large ribosomal subunit protein uL4 (223 aa).

Residues 47–72 (GTASTKTRGEVAGGGRKPWPQKHTGR) form a disordered region.

It belongs to the universal ribosomal protein uL4 family. As to quaternary structure, part of the 50S ribosomal subunit.

One of the primary rRNA binding proteins, this protein initially binds near the 5'-end of the 23S rRNA. It is important during the early stages of 50S assembly. It makes multiple contacts with different domains of the 23S rRNA in the assembled 50S subunit and ribosome. Its function is as follows. Forms part of the polypeptide exit tunnel. This Fervidobacterium nodosum (strain ATCC 35602 / DSM 5306 / Rt17-B1) protein is Large ribosomal subunit protein uL4.